Here is a 522-residue protein sequence, read N- to C-terminus: MDFLLLGLCLYWLLRRPSGVVLCLLGACFQMLPAAPSGCPQLCRCEGRLLYCEALNPTEAPHNLSGLLGLSLRYNSLSELRAGQFTGLMQLTWLYLDHNHICSVQGDAFQKLRRVKELTLSSNQITQLPNTTFRPMPNLRSVDLSYNKLQALAPDLFHGLRKLTTLHMRANAIQFVPVRIFQDCRSLKFLDIGYNQLKSLARNSFAGLFKLTELHLEHNDLVKVNFAHFPRLISLHSLCLRRNKVAIVVSSLDWVWNLKKMDLSGNEIEYMEPHVFETVPHLQSLQLDSNRLTYIEPRILNSWKSLTSITLAGNLWDCGRNVCALASWLSNFQGRYDGNLQCASPEYAQGEDVLDAVYAFHLCEDGAEPTSGHLLSAVTNRSDLGPPASSATTLADGGEGQHDGTFEPATVALPGGEHAENAVQIHKVVTGTMALIFSFLIVVLVLYVSWKCFPASLRQLRQCFVTQRRKQKQKQTMHQMAAMSAQEYYVDYKPNHIEGALVIINEYGSCTCHQQPARECEV.

The signal sequence occupies residues 1–34 (MDFLLLGLCLYWLLRRPSGVVLCLLGACFQMLPA). The LRRNT domain maps to 35–63 (APSGCPQLCRCEGRLLYCEALNPTEAPHN). Residues 35 to 427 (APSGCPQLCR…HAENAVQIHK (393 aa)) lie on the Extracellular side of the membrane. N63 carries an N-linked (GlcNAc...) asparagine glycan. 10 LRR repeats span residues 64–87 (LSGL…QFTG), 89–111 (MQLT…AFQK), 112–135 (LRRV…TFRP), 137–159 (PNLR…LFHG), 161–183 (RKLT…IFQD), 184–207 (CRSL…SFAG), 209–231 (FKLT…HFPR), 233–255 (ISLH…LDWV), 256–278 (WNLK…VFET), and 279–302 (VPHL…ILNS). N130 carries N-linked (GlcNAc...) asparagine glycosylation. Residues 314 to 365 (NLWDCGRNVCALASWLSNFQGRYDGNLQCASPEYAQGEDVLDAVYAFHLCED) enclose the LRRCT domain. N380 is a glycosylation site (N-linked (GlcNAc...) asparagine). The interval 382–401 (SDLGPPASSATTLADGGEGQ) is disordered. A helical membrane pass occupies residues 428-448 (VVTGTMALIFSFLIVVLVLYV). Over 449 to 522 (SWKCFPASLR…HQQPARECEV (74 aa)) the chain is Cytoplasmic.

It belongs to the LRRTM family.

Its subcellular location is the cell membrane. The protein resides in the postsynaptic cell membrane. In terms of biological role, exhibits strong synaptogenic activity, restricted to excitatory presynaptic differentiation, acting at both pre- and postsynaptic level. The protein is Leucine-rich repeat transmembrane neuronal protein 1 (LRRTM1) of Pongo abelii (Sumatran orangutan).